Reading from the N-terminus, the 720-residue chain is Ornithine decarboxylase (720 aa).

An N6-(pyridoxal phosphate)lysine modification is found at Lys-354.

Belongs to the Orn/Lys/Arg decarboxylase class-I family. It depends on pyridoxal 5'-phosphate as a cofactor.

It carries out the reaction L-ornithine + H(+) = putrescine + CO2. This Haemophilus influenzae (strain ATCC 51907 / DSM 11121 / KW20 / Rd) protein is Ornithine decarboxylase (speF).